The following is a 102-amino-acid chain: Large ribosomal subunit protein bL21 (102 aa).

The protein belongs to the bacterial ribosomal protein bL21 family. In terms of assembly, part of the 50S ribosomal subunit. Contacts protein L20.

Its function is as follows. This protein binds to 23S rRNA in the presence of protein L20. In Phytoplasma mali (strain AT), this protein is Large ribosomal subunit protein bL21.